The following is a 498-amino-acid chain: U4/U6 small nuclear ribonucleoprotein Prp31 (498 aa).

Coiled-coil stretches lie at residues 84 to 119 (EAAP…KYSK) and 180 to 214 (DEEL…MSFI). One can recognise a Nop domain in the interval 214–332 (IAPNLSIIVG…IERKFDKWQE (119 aa)). Positions 333–356 (PPPVKQVKPLPAPLDGQRKKRGGR) are disordered. The Nuclear localization signal (NLS) signature appears at 350–363 (RKKRGGRRYRKMKE).

Belongs to the PRP31 family. In terms of assembly, identified in the spliceosome B complex. Component of the U4/U6-U5 tri-snRNP complex. Component of some MLL1/MLL complex.

It localises to the nucleus. The protein localises to the nucleus speckle. It is found in the cajal body. Functionally, involved in pre-mRNA splicing as component of the spliceosome. Required for the assembly of the U4/U5/U6 tri-snRNP complex, one of the building blocks of the spliceosome. This Xenopus tropicalis (Western clawed frog) protein is U4/U6 small nuclear ribonucleoprotein Prp31 (prpf31).